The primary structure comprises 568 residues: Phosphoprotein (568 aa).

Disordered regions lie at residues 1–23 (MDQD…GGRE) and 38–320 (SEPT…GIGE). The span at 7–20 (ILKEDSEVEREAPG) shows a compositional bias: basic and acidic residues. The segment at 33-41 (DAVLSSEPT) is N0 binding. The segment covering 50 to 59 (LHNTINTPQG) has biased composition (polar residues). Position 68 is a phosphoserine; by host (serine 68). The span at 83–101 (RSGEESRVSGRTSKPEAEA) shows a compositional bias: basic and acidic residues. Phosphoserine; by host is present on serine 125. Over residues 150–168 (GIEDENREMAAHPDKRGED) the composition is skewed to basic and acidic residues. The span at 191–206 (ASNNGRSMEPGSSHSA) shows a compositional bias: polar residues. Phosphoserine; by host occurs at positions 192, 249, 257, and 260. The segment at 344–411 (FESSRDASYV…SFRDIYKRFS (68 aa)) is multimerization. Positions 364–429 (YAEMTFNVCG…LLMSNLSTLH (66 aa)) form a coiled coil. Positions 412–445 (EYQKEQNSLLMSNLSTLHIITDRGGKTDNTDSLT) are l protein binding. Residues serine 447 and serine 449 each carry the phosphoserine; by host modification. The interval 479 to 568 (DLIREDEFRD…VEEDIESLTN (90 aa)) is interaction with the nucleocapsid (N-RNA). The segment at 496-516 (QERDTEPRASNASRLLPSKEK) is disordered. The segment at 547 to 566 (KTDQEVKAVMELVEEDIESL) is formation of N-RNA complex involved in transcription and replication.

The protein belongs to the respirovirus P protein family. Homotetramer. Interacts (via multimerization domain) with polymerase L; this interaction forms the polymerase complex. Interacts (via N-terminus) with N0; this interaction allows P to chaperon N0 before encapsidation and form the N-P complex. Interacts (via C-terminus) with N-RNA template; this interaction positions the polymerase on the template. Phosphorylated by PKC/PRKCZ, and other unknown kinases. Phosphorylation is necessary for viral transcription and replication. The N-terminus contains the majority of phosphorylated sites. Ser-249 is the major site of phosphorylation, but is not necessary for most functions.

The protein resides in the host cytoplasm. Its function is as follows. Essential cofactor of the RNA polymerase L that plays a central role in the transcription and replication by forming the polymerase complex with RNA polymerase L and recruiting L to the genomic N-RNA template for RNA synthesis. Also plays a central role in the encapsidation of nascent RNA chains by forming the encapsidation complex with the nucleocapsid protein N (N-P complex). Acts as a chaperone for newly synthesized free N protein, so-called N0, allowing encapsidation of nascent RNA chains during replication. The nucleoprotein protein N prevents excessive phosphorylation of P, which leads to down-regulation of viral transcription/ replication. Participates, together with N, in the formation of viral factories (viroplasms), which are large inclusions in the host cytoplasm where replication takes place. Recruits host PI4KB and remodel the host endoplasmic reticulum membrane to form viral replication factories. This is Phosphoprotein (P/V/C) from Cavia cutleri (Guinea pig).